The sequence spans 515 residues: Histidine ammonia-lyase (515 aa).

Positions 148 to 150 (ASG) form a cross-link, 5-imidazolinone (Ala-Gly). At Ser149 the chain carries 2,3-didehydroalanine (Ser).

Belongs to the PAL/histidase family. Contains an active site 4-methylidene-imidazol-5-one (MIO), which is formed autocatalytically by cyclization and dehydration of residues Ala-Ser-Gly.

Its subcellular location is the cytoplasm. It carries out the reaction L-histidine = trans-urocanate + NH4(+). Its pathway is amino-acid degradation; L-histidine degradation into L-glutamate; N-formimidoyl-L-glutamate from L-histidine: step 1/3. In Pseudomonas syringae pv. tomato (strain ATCC BAA-871 / DC3000), this protein is Histidine ammonia-lyase.